The primary structure comprises 332 residues: Terpene synthase 1 (332 aa).

The DDxx(x)D/E motif signature appears at 81 to 86; it reads DDGLDA. Residues 221–229 carry the NDxxSxxxD/E motif motif; the sequence is NDLVSYEKE.

The protein belongs to the terpene synthase family.

It carries out the reaction (2E,6E)-farnesyl diphosphate = (2S,3R,6S,9S)-(-)-protoillud-7-ene + diphosphate. Its function is as follows. Terpene synthase that converts its substrate farnesyl diphosphate (FPP) into the sesquiterpene protoillud-7-ene. The chain is Terpene synthase 1 from Acytostelium subglobosum (Slime mold).